Reading from the N-terminus, the 61-residue chain is Keratin-associated protein 8-1 (61 aa).

Residues 13-49 (GCYWGSYGYPLGYSVGCGYGSTYSPVGYGLGYGYNGC) are 11 X 2 AA repeats of G-[YCGS].

Belongs to the KRTAP type 8 family. As to quaternary structure, interacts with hair keratins. As to expression, expression restricted exclusively to the cortical cells of hair follicles.

Its function is as follows. In the hair cortex, hair keratin intermediate filaments are embedded in an interfilamentous matrix, consisting of hair keratin-associated proteins (KRTAP), which are essential for the formation of a rigid and resistant hair shaft through their extensive disulfide bond cross-linking with abundant cysteine residues of hair keratins. The matrix proteins include the high-sulfur and high-glycine-tyrosine keratins. This chain is Keratin-associated protein 8-1 (Krtap8-1), found in Mus musculus (Mouse).